We begin with the raw amino-acid sequence, 299 residues long: tRNA dimethylallyltransferase (299 aa).

Residue 13-20 (GPTASGKT) coordinates ATP. 15-20 (TASGKT) serves as a coordination point for substrate. Residues 38–41 (DSRQ) are interaction with substrate tRNA.

The protein belongs to the IPP transferase family. In terms of assembly, monomer. Mg(2+) is required as a cofactor.

It catalyses the reaction adenosine(37) in tRNA + dimethylallyl diphosphate = N(6)-dimethylallyladenosine(37) in tRNA + diphosphate. Its function is as follows. Catalyzes the transfer of a dimethylallyl group onto the adenine at position 37 in tRNAs that read codons beginning with uridine, leading to the formation of N6-(dimethylallyl)adenosine (i(6)A). This Prochlorococcus marinus (strain MIT 9515) protein is tRNA dimethylallyltransferase.